Here is a 521-residue protein sequence, read N- to C-terminus: MIKQALISVSDKSGIVDFAKSLSDLGVKILSTGGTAKLLADAGLSVTEVADYTGFPEMLDGRVKTLHPKVHGGILARRDLPEHMAALEKHDIPTIDLLVVNLYPFVQTVSKEECSLEDAIENIDIGGPTMLRSAAKNHRDVTVVVDPADYAVVLDEMRANSNAVSYKTNFRLATKVFAHTAQYDGAITNYLTSLTDELQHSSRNTYPATFNLAFDKVQDLRYGENPHQSAAFYRDLSVPAGALANYNQLQGKELSYNNIADSDAAWECVKTFDVPACVIVKHANPCGVALGADAHDAYAKALQTDPTSAFGGIIAFNREVDEAAAQAVAKQFVEVLIAPSFSAEARQVFAAKQNVRLLEIALGEGHNAFDLKRVGGGLLVQSLDSKNVQPHELRVVTKRHPTPKEMDDLLFAWRVAKFVKSNAIVFCGNGMTLGVGAGQMSRVDSARIASIKAQNAGLTLAGSAVASDAFFPFRDGLDVVVAAGASCVIQPGGSMRDDEVVGAADEHNIAMVLTGVRHFRH.

The region spanning 1–145 (MIKQALISVS…KNHRDVTVVV (145 aa)) is the MGS-like domain.

Belongs to the PurH family.

The catalysed reaction is (6R)-10-formyltetrahydrofolate + 5-amino-1-(5-phospho-beta-D-ribosyl)imidazole-4-carboxamide = 5-formamido-1-(5-phospho-D-ribosyl)imidazole-4-carboxamide + (6S)-5,6,7,8-tetrahydrofolate. It catalyses the reaction IMP + H2O = 5-formamido-1-(5-phospho-D-ribosyl)imidazole-4-carboxamide. Its pathway is purine metabolism; IMP biosynthesis via de novo pathway; 5-formamido-1-(5-phospho-D-ribosyl)imidazole-4-carboxamide from 5-amino-1-(5-phospho-D-ribosyl)imidazole-4-carboxamide (10-formyl THF route): step 1/1. It participates in purine metabolism; IMP biosynthesis via de novo pathway; IMP from 5-formamido-1-(5-phospho-D-ribosyl)imidazole-4-carboxamide: step 1/1. The sequence is that of Bifunctional purine biosynthesis protein PurH from Paraburkholderia phytofirmans (strain DSM 17436 / LMG 22146 / PsJN) (Burkholderia phytofirmans).